The sequence spans 212 residues: UDP-N-acetylglucosamine transferase subunit ALG13 (212 aa).

This sequence belongs to the glycosyltransferase 28 family. In terms of assembly, heterodimer with ALG14 to form a functional enzyme.

The protein localises to the endoplasmic reticulum. It catalyses the reaction an N-acetyl-alpha-D-glucosaminyl-diphospho-di-trans,poly-cis-dolichol + UDP-N-acetyl-alpha-D-glucosamine = an N,N'-diacetylchitobiosyl-diphospho-di-trans,poly-cis-dolichol + UDP + H(+). Involved in protein N-glycosylation. Essential for the second step of the dolichol-linked oligosaccharide pathway. In Debaryomyces hansenii (strain ATCC 36239 / CBS 767 / BCRC 21394 / JCM 1990 / NBRC 0083 / IGC 2968) (Yeast), this protein is UDP-N-acetylglucosamine transferase subunit ALG13 (ALG13).